The chain runs to 192 residues: Superoxide dismutase [Fe] (192 aa).

Fe cation-binding residues include H27, H74, D157, and H161.

It belongs to the iron/manganese superoxide dismutase family. Homodimer. Fe cation is required as a cofactor.

The catalysed reaction is 2 superoxide + 2 H(+) = H2O2 + O2. Destroys superoxide anion radicals which are normally produced within the cells and which are toxic to biological systems. The polypeptide is Superoxide dismutase [Fe] (sodB) (Bordetella pertussis (strain Tohama I / ATCC BAA-589 / NCTC 13251)).